The chain runs to 300 residues: uncharacterized protein (300 aa).

One can recognise an HTH lysR-type domain in the interval 10–67 (FDLNLLVIFECIYQHLSISKAAESLYITPSAVSQSLQRLRAQFNDPLFIRSGKGIAPT). Residues 27 to 46 (ISKAAESLYITPSAVSQSLQ) constitute a DNA-binding region (H-T-H motif).

Belongs to the LysR transcriptional regulatory family.

This is an uncharacterized protein from Escherichia coli (strain K12).